The chain runs to 456 residues: MLKIYNSLKREKQVFTPIEPNKVRMYVCGMTVYDYCHLGHARVMVVFDMVYRWLKASGYDVTYVRNITDIDDKIIKRAIENGETIQQLTNRFIAFMHEDADALGVQRPDYEPRATEYVPEMLDLIGKLEANGLAYQASDGDVNYAVRKFPGYGKLSGKSLDDLRAGERVEVDSAKQDPLDFVLWKHAKPGEPAWQSPWGDGRPGWHIECSAMSSKLLGQHFDIHGGGQDLQFPHHENEIAQSEGANCCNFVNYWMHNGFVRVDNEKMSKSLGNFFTIRTVLEQFDAEVVRFFILRAHYRSPLNYSDAHLDDARRSLDSLYFALRDVPPAAADIDWSNEFAGRFAAALNEDFDSHGAIAVLFELAAEVNRQKSAGLSCLLKGLGGVIGLLEREPSAYLQGGAGVGGLDEAAVGQMIVDRAAAKKAKNFAEADRIRDELKAAGIILDDSPQGTTWRRA.

Residue cysteine 28 participates in Zn(2+) binding. The short motif at 30–40 (MTVYDYCHLGH) is the 'HIGH' region element. Residues cysteine 209, histidine 234, and glutamate 238 each coordinate Zn(2+). The short motif at 266–270 (KMSKS) is the 'KMSKS' region element. Lysine 269 contributes to the ATP binding site.

The protein belongs to the class-I aminoacyl-tRNA synthetase family. As to quaternary structure, monomer. Zn(2+) serves as cofactor.

It is found in the cytoplasm. The catalysed reaction is tRNA(Cys) + L-cysteine + ATP = L-cysteinyl-tRNA(Cys) + AMP + diphosphate. In Dechloromonas aromatica (strain RCB), this protein is Cysteine--tRNA ligase.